A 109-amino-acid polypeptide reads, in one-letter code: ATP-dependent Clp protease adapter protein ClpS 2 (109 aa).

The segment at 1 to 24 (MAGDGGRSGPSTPSTSVITKTKPR) is disordered.

Belongs to the ClpS family. In terms of assembly, binds to the N-terminal domain of the chaperone ClpA.

Functionally, involved in the modulation of the specificity of the ClpAP-mediated ATP-dependent protein degradation. This Rhodopseudomonas palustris (strain ATCC BAA-98 / CGA009) protein is ATP-dependent Clp protease adapter protein ClpS 2.